The following is a 149-amino-acid chain: Hut operon positive regulatory protein (149 aa).

The protein belongs to the HutP family. In terms of assembly, homohexamer.

Functionally, antiterminator that binds to cis-acting regulatory sequences on the mRNA in the presence of histidine, thereby suppressing transcription termination and activating the hut operon for histidine utilization. The chain is Hut operon positive regulatory protein from Geobacillus thermodenitrificans (strain NG80-2).